Here is a 166-residue protein sequence, read N- to C-terminus: Cold-inducible RNA-binding protein (166 aa).

Positions G6–K84 constitute an RRM domain. The segment at N68–E166 is disordered. A compositionally biased stretch (gly residues) spans Y93–G120. Positions S121–E166 are enriched in low complexity.

Interacts with prmt1. Interacts with elavl1/elrA (via RRM3). Associates with ribosomes. In terms of processing, methylated on arginine residues within RGG motifs. Methylation by prmt1 promotes cytoplasmic accumulation.

Its subcellular location is the nucleus. It is found in the nucleoplasm. The protein resides in the cytoplasm. In terms of biological role, cold-inducible mRNA binding protein. Acts cooperatively with elavl1/elrA to stabilize AU-rich element (ARE)-containing mRNAs by binding to themm and inhibiting their deadenylation. Essential for embryonic gastrulation and neural development, acting to maintain the expression of a set of adhesion molecules, and cell movement during embryogenesis. Required for pronephros development. In Xenopus tropicalis (Western clawed frog), this protein is Cold-inducible RNA-binding protein.